We begin with the raw amino-acid sequence, 811 residues long: Phenylalanine--tRNA ligase beta subunit (811 aa).

Residues 39–151 (RTWAAGVVVG…AGLQAGQPVG (113 aa)) enclose the tRNA-binding domain. The B5 domain occupies 409-495 (EPEHSITLRL…RLYGYDNFGE (87 aa)). Positions 473, 479, 482, and 483 each coordinate Mg(2+). The region spanning 717 to 810 (SSFPASDRDL…LVERFRVTLR (94 aa)) is the FDX-ACB domain.

The protein belongs to the phenylalanyl-tRNA synthetase beta subunit family. Type 1 subfamily. In terms of assembly, tetramer of two alpha and two beta subunits. Requires Mg(2+) as cofactor.

It is found in the cytoplasm. The catalysed reaction is tRNA(Phe) + L-phenylalanine + ATP = L-phenylalanyl-tRNA(Phe) + AMP + diphosphate + H(+). The polypeptide is Phenylalanine--tRNA ligase beta subunit (Synechococcus sp. (strain ATCC 27144 / PCC 6301 / SAUG 1402/1) (Anacystis nidulans)).